A 1187-amino-acid chain; its full sequence is ATP-dependent DNA helicase MER3 (1187 aa).

Residues 1–41 (MKTKFDRLGTGKRSRPSPNNIDFNDQSATFKRNKKNSRQPS) form a disordered region. Over residues 16-30 (PSPNNIDFNDQSATF) the composition is skewed to polar residues. Positions 148–322 (PSIYESNENC…WLKTNNELPA (175 aa)) constitute a Helicase ATP-binding domain. 161 to 168 (SPTGSGKT) is a binding site for ATP. The short motif at 268–271 (DEIH) is the DEIH box element. Residues 360–542 (KLIEIIEKHA…NLIEHLAAET (183 aa)) form the Helicase C-terminal domain. The SEC63 domain maps to 616 to 922 (STAYGNAMTR…PKLEKIEFSI (307 aa)). A C4-type zinc finger spans residues 1039–1054 (CFHSCKDKTQCRHLCC). The disordered stretch occupies residues 1146-1187 (NCPEIIPIDLESSDSYSSNTAASSISDPNGDLDFLGSDIEFE). Over residues 1158-1171 (SDSYSSNTAASSIS) the composition is skewed to low complexity.

The protein belongs to the helicase family. SKI2 subfamily. Oligomerizes. A divalent metal cation serves as cofactor. The cofactor is Zn(2+).

It localises to the nucleus. The enzyme catalyses Couples ATP hydrolysis with the unwinding of duplex DNA by translocating in the 3'-5' direction.. It catalyses the reaction ATP + H2O = ADP + phosphate + H(+). Its function is as follows. DNA-dependent ATPase and 3'-5' DNA helicase. Required in the control of double strand break transition and crossover during meiosis. ATPase is slightly better stimulated by single-stranded (ss) than double-stranded (ds)DNA. Unwinds Holliday junction (HJ) DNA to Y-DNA and to ssDNA. Efficient unwinding requires 6 nucleotides of 3'-ssDNA; seems to initiate unwinding from blunt ends when they open slightly. Binds HJ, dsDNA, ssDNA and 3'- and 5-overhang DNA. The polypeptide is ATP-dependent DNA helicase MER3 (Saccharomyces cerevisiae (strain ATCC 204508 / S288c) (Baker's yeast)).